The primary structure comprises 403 residues: Na(+)/H(+) antiporter NhaH (403 aa).

The next 12 membrane-spanning stretches (helical) occupy residues 7–27 (VFIQ…IAKL), 34–54 (VALV…IEEA), 99–119 (LAFL…YFLL), 125–145 (VAFT…LSIF), 168–188 (IAVV…EMGW), 196–216 (FMFL…GYVF), 228–245 (LEVA…FIAE), 250–272 (SGVI…IGMS), 282–302 (FWDS…GLEI), 311–331 (WGYI…AVYI), 345–365 (ILIN…LSLP), and 373–393 (QVLL…GLTL).

The protein belongs to the monovalent cation:proton antiporter 1 (CPA1) transporter (TC 2.A.36) family.

The protein localises to the cell membrane. In terms of biological role, na(+)/H(+) antiporter that extrudes sodium in exchange for external protons. Can also transport lithium. The chain is Na(+)/H(+) antiporter NhaH (nhaH) from Halobacillus aidingensis.